The sequence spans 96 residues: Small ribosomal subunit protein bS6 (96 aa).

It belongs to the bacterial ribosomal protein bS6 family.

Binds together with bS18 to 16S ribosomal RNA. This is Small ribosomal subunit protein bS6 from Streptococcus pneumoniae serotype 19F (strain G54).